Here is a 575-residue protein sequence, read N- to C-terminus: Alpha-humulene synthase (575 aa).

4 residues coordinate Mg(2+): Asp325, Asp329, Asp469, and Glu477. The DDXXD motif motif lies at Asp325–Asp329.

Belongs to the terpene synthase family. Tpsa subfamily. It depends on Mg(2+) as a cofactor. The cofactor is Mn(2+).

The catalysed reaction is (2E,6E)-farnesyl diphosphate = alpha-humulene + diphosphate. It functions in the pathway sesquiterpene biosynthesis. The protein operates within terpene metabolism; oleoresin biosynthesis. Terpene synthase (TPS) involved in the biosynthesis of sesquiterpene natural products included in conifer oleoresin secretions and volatile emissions; these compounds contribute to biotic and abiotic stress defense against herbivores and pathogens. Catalyzes the conversion of (2E,6E)-farnesyl diphosphate (FPP) to (1E,4E,8E)-alpha-humulene. The polypeptide is Alpha-humulene synthase (Picea glauca (White spruce)).